Here is a 196-residue protein sequence, read N- to C-terminus: Peptidyl-tRNA hydrolase (196 aa).

Residue Tyr16 coordinates tRNA. Residue His21 is the Proton acceptor of the active site. TRNA is bound by residues Phe67, Asn69, and Asn115.

The protein belongs to the PTH family. Monomer.

It localises to the cytoplasm. It carries out the reaction an N-acyl-L-alpha-aminoacyl-tRNA + H2O = an N-acyl-L-amino acid + a tRNA + H(+). Functionally, hydrolyzes ribosome-free peptidyl-tRNAs (with 1 or more amino acids incorporated), which drop off the ribosome during protein synthesis, or as a result of ribosome stalling. In terms of biological role, catalyzes the release of premature peptidyl moieties from peptidyl-tRNA molecules trapped in stalled 50S ribosomal subunits, and thus maintains levels of free tRNAs and 50S ribosomes. This chain is Peptidyl-tRNA hydrolase, found in Edwardsiella ictaluri (strain 93-146).